A 73-amino-acid chain; its full sequence is Conotoxin Asp7/Gla(3)-TxVI (73 aa).

The N-terminal stretch at 1–19 (MQKLIILLLVAAVLMSTQA) is a signal peptide. A propeptide spanning residues 20-44 (VLQEKRPKEKIKFLSKRKTDAEKQQ) is cleaved from the precursor. Cystine bridges form between Cys48–Cys62, Cys55–Cys66, and Cys61–Cys71. 2 positions are modified to 4-hydroxyproline: Pro49 and Pro54. A 4-carboxyglutamate modification is found at Glu60. Residue Trp64 is modified to 6'-bromotryptophan.

As to expression, expressed by the venom duct.

Its subcellular location is the secreted. In Conus textile (Cloth-of-gold cone), this protein is Conotoxin Asp7/Gla(3)-TxVI.